The sequence spans 288 residues: Shikimate dehydrogenase (NADP(+)) (288 aa).

Shikimate is bound by residues 18–20 (SRS) and Thr-65. Lys-69 (proton acceptor) is an active-site residue. An NADP(+)-binding site is contributed by Glu-81. Asn-90 and Asp-106 together coordinate shikimate. NADP(+)-binding positions include 131-135 (GAGGA), 155-160 (NRTLAK), and Met-223. Tyr-225 contacts shikimate. Gly-246 is an NADP(+) binding site.

It belongs to the shikimate dehydrogenase family. As to quaternary structure, homodimer.

The enzyme catalyses shikimate + NADP(+) = 3-dehydroshikimate + NADPH + H(+). The protein operates within metabolic intermediate biosynthesis; chorismate biosynthesis; chorismate from D-erythrose 4-phosphate and phosphoenolpyruvate: step 4/7. Involved in the biosynthesis of the chorismate, which leads to the biosynthesis of aromatic amino acids. Catalyzes the reversible NADPH linked reduction of 3-dehydroshikimate (DHSA) to yield shikimate (SA). The sequence is that of Shikimate dehydrogenase (NADP(+)) from Verminephrobacter eiseniae (strain EF01-2).